A 360-amino-acid polypeptide reads, in one-letter code: 3-isopropylmalate dehydrogenase (360 aa).

76–89 provides a ligand contact to NAD(+); that stretch reads GPKWDTIERDIRPE. Positions 96, 106, 134, and 224 each coordinate substrate. Mg(2+)-binding residues include aspartate 224, aspartate 248, and aspartate 252. 282–294 serves as a coordination point for NAD(+); sequence GSAPDIAGQGIAN.

It belongs to the isocitrate and isopropylmalate dehydrogenases family. LeuB type 1 subfamily. In terms of assembly, homodimer. It depends on Mg(2+) as a cofactor. Requires Mn(2+) as cofactor.

The protein resides in the cytoplasm. The catalysed reaction is (2R,3S)-3-isopropylmalate + NAD(+) = 4-methyl-2-oxopentanoate + CO2 + NADH. It participates in amino-acid biosynthesis; L-leucine biosynthesis; L-leucine from 3-methyl-2-oxobutanoate: step 3/4. Its function is as follows. Catalyzes the oxidation of 3-carboxy-2-hydroxy-4-methylpentanoate (3-isopropylmalate) to 3-carboxy-4-methyl-2-oxopentanoate. The product decarboxylates to 4-methyl-2 oxopentanoate. The sequence is that of 3-isopropylmalate dehydrogenase from Pseudomonas syringae pv. tomato (strain ATCC BAA-871 / DC3000).